Consider the following 281-residue polypeptide: Pantothenate synthetase (281 aa).

Position 30–37 (30–37 (MGYYHAGH)) interacts with ATP. H37 (proton donor) is an active-site residue. Q61 is a (R)-pantoate binding site. Q61 lines the beta-alanine pocket. Residue 147-150 (GEKD) coordinates ATP. Q153 lines the (R)-pantoate pocket. ATP is bound by residues V176 and 184 to 187 (MSSR).

Belongs to the pantothenate synthetase family. Homodimer.

It localises to the cytoplasm. It catalyses the reaction (R)-pantoate + beta-alanine + ATP = (R)-pantothenate + AMP + diphosphate + H(+). The protein operates within cofactor biosynthesis; (R)-pantothenate biosynthesis; (R)-pantothenate from (R)-pantoate and beta-alanine: step 1/1. Functionally, catalyzes the condensation of pantoate with beta-alanine in an ATP-dependent reaction via a pantoyl-adenylate intermediate. In Oleidesulfovibrio alaskensis (strain ATCC BAA-1058 / DSM 17464 / G20) (Desulfovibrio alaskensis), this protein is Pantothenate synthetase.